The following is a 274-amino-acid chain: Ribose-5-phosphate isomerase (274 aa).

This sequence belongs to the ribose 5-phosphate isomerase family.

Its subcellular location is the cytoplasm. It catalyses the reaction aldehydo-D-ribose 5-phosphate = D-ribulose 5-phosphate. The protein operates within carbohydrate degradation; pentose phosphate pathway; D-ribose 5-phosphate from D-ribulose 5-phosphate (non-oxidative stage): step 1/1. In Schizosaccharomyces pombe (strain 972 / ATCC 24843) (Fission yeast), this protein is Ribose-5-phosphate isomerase (rki1).